The following is a 105-amino-acid chain: POU domain, class 3, transcription factor 3 (105 aa).

The 49-residue stretch at 1 to 49 folds into the POU-specific domain; sequence QADVGLALGTLYGNVFSQTTICRFEALQLSFKNMCKLKPLLNKWLEEAD. The homeobox DNA-binding region spans 67-105; that stretch reads KRKKRTSIEVSVKGALESHFLKCPKPAAQEITTLADSLQ.

Belongs to the POU transcription factor family. Class-3 subfamily.

It is found in the nucleus. The sequence is that of POU domain, class 3, transcription factor 3 (pou3f3) from Xenopus laevis (African clawed frog).